The chain runs to 315 residues: Methionyl-tRNA formyltransferase (315 aa).

S113–P116 lines the (6S)-5,6,7,8-tetrahydrofolate pocket.

The protein belongs to the Fmt family.

The catalysed reaction is L-methionyl-tRNA(fMet) + (6R)-10-formyltetrahydrofolate = N-formyl-L-methionyl-tRNA(fMet) + (6S)-5,6,7,8-tetrahydrofolate + H(+). Functionally, attaches a formyl group to the free amino group of methionyl-tRNA(fMet). The formyl group appears to play a dual role in the initiator identity of N-formylmethionyl-tRNA by promoting its recognition by IF2 and preventing the misappropriation of this tRNA by the elongation apparatus. This Enterobacter sp. (strain 638) protein is Methionyl-tRNA formyltransferase.